Here is an 885-residue protein sequence, read N- to C-terminus: Dual serine/threonine and tyrosine protein kinase (885 aa).

Residues 614 to 868 form the Protein kinase domain; sequence PKLGRELGRG…PLLGIVQPGL (255 aa). ATP contacts are provided by residues 620-628 and lysine 643; that span reads LGRGQYGVV. The Proton acceptor role is filled by aspartate 739.

It belongs to the protein kinase superfamily. Ser/Thr protein kinase family.

It localises to the cytoplasm. Its subcellular location is the cell membrane. The protein localises to the apical cell membrane. It is found in the basolateral cell membrane. The protein resides in the cell junction. It catalyses the reaction L-seryl-[protein] + ATP = O-phospho-L-seryl-[protein] + ADP + H(+). The catalysed reaction is L-threonyl-[protein] + ATP = O-phospho-L-threonyl-[protein] + ADP + H(+). It carries out the reaction L-tyrosyl-[protein] + ATP = O-phospho-L-tyrosyl-[protein] + ADP + H(+). Its function is as follows. May act as a positive regulator of ERK phosphorylation downstream of fibroblast growth factor-receptor activation. May induce both caspase-dependent apoptosis and caspase-independent cell death. Plays a role in the embryonic development. The chain is Dual serine/threonine and tyrosine protein kinase (dstyk) from Danio rerio (Zebrafish).